The following is a 101-amino-acid chain: MNIAEFHQNIEHVWQKIEEELENQGADVDCETQGSVFTITFDNRTQIVINKQEPLLELWIASKLGGFHFAFKNGEWVSNDGQRFWDCFVEACAAHGENVQF.

It belongs to the frataxin family.

Its function is as follows. Involved in iron-sulfur (Fe-S) cluster assembly. May act as a regulator of Fe-S biogenesis. The chain is Iron-sulfur cluster assembly protein CyaY from Haemophilus influenzae (strain PittEE).